A 170-amino-acid chain; its full sequence is Acireductone dioxygenase (170 aa).

Residues histidine 99, histidine 101, glutamate 105, and histidine 144 each coordinate Fe(2+). Ni(2+) is bound by residues histidine 99, histidine 101, glutamate 105, and histidine 144.

The protein belongs to the acireductone dioxygenase (ARD) family. In terms of assembly, monomer. Fe(2+) is required as a cofactor. It depends on Ni(2+) as a cofactor.

It carries out the reaction 1,2-dihydroxy-5-(methylsulfanyl)pent-1-en-3-one + O2 = 3-(methylsulfanyl)propanoate + CO + formate + 2 H(+). The catalysed reaction is 1,2-dihydroxy-5-(methylsulfanyl)pent-1-en-3-one + O2 = 4-methylsulfanyl-2-oxobutanoate + formate + 2 H(+). It functions in the pathway amino-acid biosynthesis; L-methionine biosynthesis via salvage pathway; L-methionine from S-methyl-5-thio-alpha-D-ribose 1-phosphate: step 5/6. In terms of biological role, catalyzes 2 different reactions between oxygen and the acireductone 1,2-dihydroxy-3-keto-5-methylthiopentene (DHK-MTPene) depending upon the metal bound in the active site. Fe-containing acireductone dioxygenase (Fe-ARD) produces formate and 2-keto-4-methylthiobutyrate (KMTB), the alpha-ketoacid precursor of methionine in the methionine recycle pathway. Ni-containing acireductone dioxygenase (Ni-ARD) produces methylthiopropionate, carbon monoxide and formate, and does not lie on the methionine recycle pathway. In Bacillus anthracis, this protein is Acireductone dioxygenase.